The sequence spans 463 residues: Chromosomal replication initiator protein DnaA (463 aa).

The tract at residues 1-84 is domain I, interacts with DnaA modulators; the sequence is MNTNQIILTN…QLFQHYNNAI (84 aa). The segment at 84-124 is domain II; it reads IKTVEIITKELPASNQATLELPTKTFADIGSSELNSENIFS. The interval 125-343 is domain III, AAA+ region; the sequence is TFDIRFTFDN…GALNKVIAHS (219 aa). The ATP site is built by Gly-171, Gly-173, Lys-174, and Thr-175. The domain IV, binds dsDNA stretch occupies residues 344-463; it reads NFTAKEITLE…INLMMKILQN (120 aa).

The protein belongs to the DnaA family. Oligomerizes as a right-handed, spiral filament on DNA at oriC.

It is found in the cytoplasm. Plays an essential role in the initiation and regulation of chromosomal replication. ATP-DnaA binds to the origin of replication (oriC) to initiate formation of the DNA replication initiation complex once per cell cycle. Binds the DnaA box (a 9 base pair repeat at the origin) and separates the double-stranded (ds)DNA. Forms a right-handed helical filament on oriC DNA; dsDNA binds to the exterior of the filament while single-stranded (ss)DNA is stabiized in the filament's interior. The ATP-DnaA-oriC complex binds and stabilizes one strand of the AT-rich DNA unwinding element (DUE), permitting loading of DNA polymerase. After initiation quickly degrades to an ADP-DnaA complex that is not apt for DNA replication. Binds acidic phospholipids. The sequence is that of Chromosomal replication initiator protein DnaA from Rickettsia bellii (strain OSU 85-389).